A 76-amino-acid polypeptide reads, in one-letter code: Protein CASC2, isoforms 1/2 (76 aa).

The interval 1–20 is disordered; it reads MAGTRGLMLLGPGPVAGPRD.

This Homo sapiens (Human) protein is Protein CASC2, isoforms 1/2 (CASC2).